The chain runs to 145 residues: Phospholipase A2, membrane associated (145 aa).

Positions 1–20 (MKLLLLLLVVMASDLPQAHG) are cleaved as a signal peptide. 7 cysteine pairs are disulfide-bonded: Cys-46–Cys-138, Cys-48–Cys-64, Cys-63–Cys-118, Cys-69–Cys-145, Cys-70–Cys-111, Cys-79–Cys-104, and Cys-97–Cys-109. Ca(2+) is bound by residues His-47, Gly-49, and Gly-51. The active site involves His-67. Asp-68 serves as a coordination point for Ca(2+). Asp-112 is a catalytic residue.

The protein belongs to the phospholipase A2 family. The cofactor is Ca(2+). In terms of tissue distribution, alveolar macrophages, and at much lower levels in peripheral blood monocytes and peritoneal macrophages.

It localises to the secreted. Its subcellular location is the cell membrane. The protein resides in the mitochondrion outer membrane. The catalysed reaction is a 1,2-diacyl-sn-glycero-3-phosphoethanolamine + H2O = a 1-acyl-sn-glycero-3-phosphoethanolamine + a fatty acid + H(+). It carries out the reaction 1-hexadecanoyl-2-(9Z-octadecenoyl)-sn-glycero-3-phosphoethanolamine + H2O = 1-hexadecanoyl-sn-glycero-3-phosphoethanolamine + (9Z)-octadecenoate + H(+). It catalyses the reaction 1-hexadecanoyl-2-(9Z,12Z-octadecadienoyl)-sn-glycero-3-phosphoethanolamine + H2O = 1-hexadecanoyl-sn-glycero-3-phosphoethanolamine + (9Z,12Z)-octadecadienoate + H(+). The enzyme catalyses 1-hexadecanoyl-2-(5Z,8Z,11Z,14Z-eicosatetraenoyl)-sn-glycero-3-phosphoethanolamine + H2O = 1-hexadecanoyl-sn-glycero-3-phosphoethanolamine + (5Z,8Z,11Z,14Z)-eicosatetraenoate + H(+). The catalysed reaction is N-hexadecanoyl-1,2-di-(9Z-octadecenoyl)-sn-glycero-3-phosphoethanolamine + H2O = N-hexadecanoyl-1-(9Z-octadecenoyl)-sn-glycero-3-phosphoethanolamine + (9Z)-octadecenoate + H(+). It carries out the reaction 1,2-dihexadecanoyl-sn-glycero-3-phospho-(1'-sn-glycerol) + H2O = 1-hexadecanoyl-sn-glycero-3-phospho-(1'-sn-glycerol) + hexadecanoate + H(+). It catalyses the reaction 1-hexadecanoyl-2-(9Z-octadecenoyl)-sn-glycero-3-phosphoglycerol + H2O = 1-hexadecanoyl-sn-glycero-3-phosphoglycerol + (9Z)-octadecenoate + H(+). The enzyme catalyses 1-hexadecanoyl-2-(9Z-octadecenoyl)-sn-glycero-3-phospho-(1'-sn-glycerol) + H2O = 1-hexadecanoyl-sn-glycero-3-phospho-(1'-sn-glycerol) + (9Z)-octadecenoate + H(+). The catalysed reaction is a 1,2-diacyl-sn-glycero-3-phosphocholine + H2O = a 1-acyl-sn-glycero-3-phosphocholine + a fatty acid + H(+). It carries out the reaction 1,2-dihexadecanoyl-sn-glycero-3-phosphocholine + H2O = 1-hexadecanoyl-sn-glycero-3-phosphocholine + hexadecanoate + H(+). It catalyses the reaction 1-hexadecanoyl-2-(9Z-octadecenoyl)-sn-glycero-3-phosphocholine + H2O = 1-hexadecanoyl-sn-glycero-3-phosphocholine + (9Z)-octadecenoate + H(+). The enzyme catalyses 1-hexadecanoyl-2-(9Z,12Z-octadecadienoyl)-sn-glycero-3-phosphocholine + H2O = (9Z,12Z)-octadecadienoate + 1-hexadecanoyl-sn-glycero-3-phosphocholine + H(+). The catalysed reaction is 1-hexadecanoyl-2-(4Z,7Z,10Z,13Z,16Z,19Z-docosahexaenoyl)-sn-glycero-3-phosphocholine + H2O = (4Z,7Z,10Z,13Z,16Z,19Z)-docosahexaenoate + 1-hexadecanoyl-sn-glycero-3-phosphocholine + H(+). In terms of biological role, secretory calcium-dependent phospholipase A2 that primarily targets extracellular phospholipids with implications in host antimicrobial defense, inflammatory response and tissue regeneration. Hydrolyzes the ester bond of the fatty acyl group attached at sn-2 position of phospholipids (phospholipase A2 activity) with preference for phosphatidylethanolamines and phosphatidylglycerols over phosphatidylcholines. Contributes to lipid remodeling of cellular membranes and generation of lipid mediators involved in pathogen clearance. Displays bactericidal activity against Gram-positive bacteria by directly hydrolyzing phospholipids of the bacterial membrane. Upon sterile inflammation, targets membrane phospholipids of extracellular mitochondria released from activated platelets, generating free unsaturated fatty acids such as arachidonate that is used by neighboring leukocytes to synthesize inflammatory eicosanoids such as leukotrienes. Simultaneously, by compromising mitochondrial membrane integrity, promotes the release in circulation of potent damage-associated molecular pattern molecules that activate the innate immune response. Plays a stem cell regulator role in the intestinal crypt. Within intracellular compartment mediates Paneth cell differentiation and its stem cell supporting functions by inhibiting Wnt signaling pathway in intestinal stem cell (ICS). Secreted in the intestinal lumen upon inflammation, acts in an autocrine way and promotes prostaglandin E2 synthesis that stimulates Wnt signaling pathway in ICS cells and tissue regeneration. May play a role in the biosynthesis of N-acyl ethanolamines that regulate energy metabolism and inflammation. Hydrolyzes N-acyl phosphatidylethanolamines to N-acyl lysophosphatidylethanolamines, which are further cleaved by a lysophospholipase D to release N-acyl ethanolamines. Independent of its catalytic activity, acts as a ligand for integrins. Binds to and activates integrins ITGAV:ITGB3, ITGA4:ITGB1 and ITGA5:ITGB1. Binds to a site (site 2) which is distinct from the classical ligand-binding site (site 1) and induces integrin conformational changes and enhanced ligand binding to site 1. Induces cell proliferation in an integrin-dependent manner. This Cavia porcellus (Guinea pig) protein is Phospholipase A2, membrane associated (PLA2G2A).